The primary structure comprises 673 residues: Elongation factor G 1 (673 aa).

The region spanning 3-277 is the tr-type G domain; sequence KELRNIGIIA…SIVDYLPSPL (275 aa). GTP is bound by residues 12–19, 76–80, and 130–133; these read AHIDAGKT, DTPGH, and NKMD.

It belongs to the TRAFAC class translation factor GTPase superfamily. Classic translation factor GTPase family. EF-G/EF-2 subfamily.

Its subcellular location is the cytoplasm. Functionally, catalyzes the GTP-dependent ribosomal translocation step during translation elongation. During this step, the ribosome changes from the pre-translocational (PRE) to the post-translocational (POST) state as the newly formed A-site-bound peptidyl-tRNA and P-site-bound deacylated tRNA move to the P and E sites, respectively. Catalyzes the coordinated movement of the two tRNA molecules, the mRNA and conformational changes in the ribosome. The polypeptide is Elongation factor G 1 (Syntrophomonas wolfei subsp. wolfei (strain DSM 2245B / Goettingen)).